The chain runs to 379 residues: MNNTEFYDRLGVSKDASQDEIKKAYRRMSKKYHPDINKETGAEEKYKEVQEAYETLSDTQKRAAYDQYGAAGANGGFGGFDGGGFGGFDGGGFGGFEDIFSSFFGGGGMRNPNAPRQGDDLQYRVNLSFEEAIFGAEKEVSYNRESSCHTCSGSGAKPGTSPVTCQKCHGSGVINVDTQTPLGTMRRQVTCDVCQGSGQEIKEKCPTCHGTGHEKKTHKVSVKIPAGVETGQQIRLTGQGEAGFNGGPYGDLFVIINVLPSQQFERNGSTIYYTLNISFVQAALGDTIDIPTVHGAVEMSIPAGTQTGKTFRLRGKGAPKLRGGGQGDQHVTVNIVTPTKLNDAQKEALHAFAEASGDKMVHPKKKGFFDKVKDALDVD.

The region spanning 5–69 (EFYDRLGVSK…QKRAAYDQYG (65 aa)) is the J domain. The CR-type zinc-finger motif lies at 135-217 (GAEKEVSYNR…CHGTGHEKKT (83 aa)). Zn(2+)-binding residues include C148, C151, C165, C168, C191, C194, C205, and C208. CXXCXGXG motif repeat units lie at residues 148 to 155 (CHTCSGSG), 165 to 172 (CQKCHGSG), 191 to 198 (CDVCQGSG), and 205 to 212 (CPTCHGTG).

It belongs to the DnaJ family. Homodimer. Zn(2+) serves as cofactor.

It localises to the cytoplasm. Its function is as follows. Participates actively in the response to hyperosmotic and heat shock by preventing the aggregation of stress-denatured proteins and by disaggregating proteins, also in an autonomous, DnaK-independent fashion. Unfolded proteins bind initially to DnaJ; upon interaction with the DnaJ-bound protein, DnaK hydrolyzes its bound ATP, resulting in the formation of a stable complex. GrpE releases ADP from DnaK; ATP binding to DnaK triggers the release of the substrate protein, thus completing the reaction cycle. Several rounds of ATP-dependent interactions between DnaJ, DnaK and GrpE are required for fully efficient folding. Also involved, together with DnaK and GrpE, in the DNA replication of plasmids through activation of initiation proteins. This Streptococcus agalactiae serotype V (strain ATCC BAA-611 / 2603 V/R) protein is Chaperone protein DnaJ.